Here is a 130-residue protein sequence, read N- to C-terminus: Nascent polypeptide-associated complex protein (130 aa).

An NAC-A/B domain is found at 6–74; that stretch reads GMNPRKMQQM…PVERDAADAI (69 aa). The segment at 65–91 is disordered; the sequence is PVERDAADAIEAAPADDSDDTDDDDAI. Residues 78–90 are compositionally biased toward acidic residues; the sequence is PADDSDDTDDDDA.

It belongs to the NAC-alpha family. As to quaternary structure, homodimer. Interacts with the ribosome. Binds ribosomal RNA.

Functionally, contacts the emerging nascent chain on the ribosome. The polypeptide is Nascent polypeptide-associated complex protein (Halobacterium salinarum (strain ATCC 700922 / JCM 11081 / NRC-1) (Halobacterium halobium)).